The chain runs to 379 residues: Succinate--CoA ligase [ADP-forming] subunit beta (379 aa).

The ATP-grasp domain occupies 9–236; it reads KEIARKYGIE…GRDATPYEKV (228 aa). ATP contacts are provided by residues K46, 53 to 55, E92, V95, and E100; that span reads GRG. N192 and D206 together coordinate Mg(2+). Substrate-binding positions include N256 and 313–315; that span reads GIT.

It belongs to the succinate/malate CoA ligase beta subunit family. As to quaternary structure, heterotetramer of two alpha and two beta subunits. Mg(2+) is required as a cofactor.

The enzyme catalyses succinate + ATP + CoA = succinyl-CoA + ADP + phosphate. It carries out the reaction GTP + succinate + CoA = succinyl-CoA + GDP + phosphate. It participates in carbohydrate metabolism; tricarboxylic acid cycle; succinate from succinyl-CoA (ligase route): step 1/1. Succinyl-CoA synthetase functions in the citric acid cycle (TCA), coupling the hydrolysis of succinyl-CoA to the synthesis of either ATP or GTP and thus represents the only step of substrate-level phosphorylation in the TCA. The beta subunit provides nucleotide specificity of the enzyme and binds the substrate succinate, while the binding sites for coenzyme A and phosphate are found in the alpha subunit. This is Succinate--CoA ligase [ADP-forming] subunit beta from Desulfurococcus amylolyticus (strain DSM 18924 / JCM 16383 / VKM B-2413 / 1221n) (Desulfurococcus kamchatkensis).